We begin with the raw amino-acid sequence, 115 residues long: Large ribosomal subunit protein bL20 (115 aa).

This sequence belongs to the bacterial ribosomal protein bL20 family.

In terms of biological role, binds directly to 23S ribosomal RNA and is necessary for the in vitro assembly process of the 50S ribosomal subunit. It is not involved in the protein synthesizing functions of that subunit. In Prochlorococcus marinus (strain MIT 9515), this protein is Large ribosomal subunit protein bL20.